The primary structure comprises 221 residues: Potassium voltage-gated channel subfamily E member 4 (221 aa).

Over 1–86 (MHFLTIYPNC…AGGGSGNGNE (86 aa)) the chain is Extracellular. Asn-9 is a glycosylation site (N-linked (GlcNAc...) asparagine). Positions 58-72 (LNSTHPGTAASSSPL) are enriched in polar residues. Residues 58-77 (LNSTHPGTAASSSPLESRAA) form a disordered region. The chain crosses the membrane as a helical span at residues 87-107 (YFYILVVMSFYGIFLIGIMLG). Residues 108–221 (YMKSKRREKK…GSSENIHQNS (114 aa)) lie on the Cytoplasmic side of the membrane. The interval 175–221 (SVSSESSSPDVHLTIQEEGADDELEETSETPLNESSEGSSENIHQNS) is disordered. Positions 192–202 (EGADDELEETS) are enriched in acidic residues. The span at 203–221 (ETPLNESSEGSSENIHQNS) shows a compositional bias: polar residues.

Belongs to the potassium channel KCNE family. In terms of assembly, forms heterooligomers with KCNA3, inhibiting its activity by impairing localization to the cell membrane. The stoichiometry of KCNA3 and KCNE4 in the heterooligomers are 4:1, 4:2, 4:3 or 4:4 respectively. Increasing the number of KCNE4 subunits steadily slows the activation KCNA3 and decreases its abundance at the cell membrane. However, a single subunit of KCNE4 is sufficient for the cooperative enhancement of the inactivating function of the channel. However, a single subunit of KCNE4 is sufficient for the cooperative enhancement of the inactivating function of the channel. Interacts with KCNQ1; impairs KCNQ1 localization in lipid rafts and inhibits voltage-gated potassium channel activity. As to expression, predominantly expressed in embryo and adult uterus. Low expression found in kidney, small intestine, lung and heart. In terms of tissue distribution, detected in kidney, thymus, and uterus (at protein level).

The protein resides in the membrane. Its function is as follows. Ancillary protein that functions as a regulatory subunit of the voltage-gated potassium (Kv) channel complex composed of pore-forming and potassium-conducting alpha subunits and of regulatory beta subunits. KCNE4 beta subunit modulates the gating kinetics and enhances stability of the channel complex. Associates with KCNQ1/KVLTQ1 alpha subunit to inhibit potassium currents. May inhibit KCNQ4-mediated potassium currents. This chain is Potassium voltage-gated channel subfamily E member 4, found in Homo sapiens (Human).